A 249-amino-acid chain; its full sequence is Putative S-adenosyl-L-methionine-dependent methyltransferase Mjls_0570 (249 aa).

Residues D111 and 141–142 (DL) contribute to the S-adenosyl-L-methionine site.

This sequence belongs to the UPF0677 family.

In terms of biological role, exhibits S-adenosyl-L-methionine-dependent methyltransferase activity. This is Putative S-adenosyl-L-methionine-dependent methyltransferase Mjls_0570 from Mycobacterium sp. (strain JLS).